The chain runs to 908 residues: NADH-quinone oxidoreductase subunit G (908 aa).

The region spanning Ala2–Glu83 is the 2Fe-2S ferredoxin-type domain. Residues Cys34, Cys45, Cys48, and Cys67 each contribute to the [2Fe-2S] cluster site. One can recognise a 4Fe-4S His(Cys)3-ligated-type domain in the interval Glu83–Gly122. Residues His99, Cys103, Cys106, Cys112, Cys151, Cys154, Cys157, Cys201, Cys228, Cys231, Cys235, and Cys263 each contribute to the [4Fe-4S] cluster site. In terms of domain architecture, 4Fe-4S Mo/W bis-MGD-type spans Met221–Asp277.

This sequence belongs to the complex I 75 kDa subunit family. As to quaternary structure, composed of 13 different subunits. Subunits NuoCD, E, F, and G constitute the peripheral sector of the complex. The cofactor is [2Fe-2S] cluster. Requires [4Fe-4S] cluster as cofactor.

It carries out the reaction a quinone + NADH + 5 H(+)(in) = a quinol + NAD(+) + 4 H(+)(out). Its function is as follows. NDH-1 shuttles electrons from NADH, via FMN and iron-sulfur (Fe-S) centers, to quinones in the respiratory chain. The immediate electron acceptor for the enzyme in this species is believed to be ubiquinone. Couples the redox reaction to proton translocation (for every two electrons transferred, four hydrogen ions are translocated across the cytoplasmic membrane), and thus conserves the redox energy in a proton gradient. The polypeptide is NADH-quinone oxidoreductase subunit G (nuoG) (Escherichia coli O6:H1 (strain CFT073 / ATCC 700928 / UPEC)).